A 353-amino-acid polypeptide reads, in one-letter code: DNA integrity scanning protein DisA (353 aa).

The DAC domain maps to 6 to 144 (DKELMNILKI…GGIKYVLRDS (139 aa)). Residues G73, L91, and 104-108 (TRHRT) each bind ATP.

Belongs to the DisA family. Homooctamer. Mg(2+) is required as a cofactor.

It catalyses the reaction 2 ATP = 3',3'-c-di-AMP + 2 diphosphate. Functionally, participates in a DNA-damage check-point that is active prior to asymmetric division when DNA is damaged. DisA forms globular foci that rapidly scan along the chromosomes during sporulation, searching for lesions. When a lesion is present, DisA pauses at the lesion site. This triggers a cellular response that culminates in a temporary block in sporulation initiation. Also has diadenylate cyclase activity, catalyzing the condensation of 2 ATP molecules into cyclic di-AMP (c-di-AMP). c-di-AMP acts as a signaling molecule that couples DNA integrity with progression of sporulation. The rise in c-di-AMP level generated by DisA while scanning the chromosome, operates as a positive signal that advances sporulation; upon encountering a lesion, the DisA focus arrests at the damaged site and halts c-di-AMP synthesis. This chain is DNA integrity scanning protein DisA, found in Clostridium botulinum (strain Loch Maree / Type A3).